Here is a 391-residue protein sequence, read N- to C-terminus: Elongation factor Tu (391 aa).

The region spanning 10–201 is the tr-type G domain; it reads KPHVNIGTIG…AVDAYIPTPE (192 aa). Residues 19–26 are G1; sequence GHVDHGKT. 19 to 26 is a binding site for GTP; it reads GHVDHGKT. Threonine 26 contacts Mg(2+). Residues 55–59 are G2; that stretch reads GITIS. The tract at residues 76–79 is G3; the sequence is DCPG. GTP contacts are provided by residues 76-80 and 131-134; these read DCPGH and NKVD. Residues 131–134 are G4; the sequence is NKVD. The G5 stretch occupies residues 169 to 171; it reads SAL.

Belongs to the TRAFAC class translation factor GTPase superfamily. Classic translation factor GTPase family. EF-Tu/EF-1A subfamily. Monomer.

The protein resides in the cytoplasm. The catalysed reaction is GTP + H2O = GDP + phosphate + H(+). GTP hydrolase that promotes the GTP-dependent binding of aminoacyl-tRNA to the A-site of ribosomes during protein biosynthesis. In Rhizobium johnstonii (strain DSM 114642 / LMG 32736 / 3841) (Rhizobium leguminosarum bv. viciae), this protein is Elongation factor Tu.